A 447-amino-acid polypeptide reads, in one-letter code: Chromosomal replication initiator protein DnaA (447 aa).

Positions 1–79 (MVSCENLWQQ…TGQEITVKLI (79 aa)) are domain I, interacts with DnaA modulators. The domain II stretch occupies residues 79–105 (ITDGLEPHSLIGQESSLPMETTPKNAT). The interval 106–322 (ALNGKYTFSR…GALIRAIAYT (217 aa)) is domain III, AAA+ region. Residues Gly150, Gly152, Lys153, and Thr154 each coordinate ATP. Positions 323 to 447 (SLSNVAMTVE…INIAGQAPES (125 aa)) are domain IV, binds dsDNA.

Belongs to the DnaA family. Oligomerizes as a right-handed, spiral filament on DNA at oriC.

It localises to the cytoplasm. Plays an essential role in the initiation and regulation of chromosomal replication. ATP-DnaA binds to the origin of replication (oriC) to initiate formation of the DNA replication initiation complex once per cell cycle. Binds the DnaA box (a 9 base pair repeat at the origin) and separates the double-stranded (ds)DNA. Forms a right-handed helical filament on oriC DNA; dsDNA binds to the exterior of the filament while single-stranded (ss)DNA is stabiized in the filament's interior. The ATP-DnaA-oriC complex binds and stabilizes one strand of the AT-rich DNA unwinding element (DUE), permitting loading of DNA polymerase. After initiation quickly degrades to an ADP-DnaA complex that is not apt for DNA replication. Binds acidic phospholipids. Its function is as follows. Isolated domain IV (residues 348-447) binds both E.coli and B.subtilis oriC. This chain is Chromosomal replication initiator protein DnaA, found in Synechocystis sp. (strain ATCC 27184 / PCC 6803 / Kazusa).